We begin with the raw amino-acid sequence, 147 residues long: Gastrin-releasing peptide (147 aa).

The signal sequence occupies residues 1-23 (MRGSELSLLLLALVLCQAPRGPA). A Methionine amide modification is found at Met52. Positions 56-147 (STDELPPLYA…VLKGKEGTAS (92 aa)) are excised as a propeptide. The tract at residues 95 to 123 (AGNRSHQPPQDQPLGSLQPTWDPEDGSYF) is disordered. Positions 98–113 (RSHQPPQDQPLGSLQP) are enriched in polar residues.

The protein belongs to the bombesin/neuromedin-B/ranatensin family. Expressed in several dozen cells in the dorsal retrotrapezoid nucleus/parafacial respiratory group (at protein level).

It localises to the secreted. The protein localises to the cytoplasmic vesicle. It is found in the secretory vesicle lumen. Its subcellular location is the cell projection. The protein resides in the neuron projection. Functionally, stimulates the release of gastrin and other gastrointestinal hormones. Contributes to the perception of prurient stimuli and to the transmission of itch signals in the spinal cord that promote scratching behavior. Contributes primarily to nonhistaminergic itch sensation. In one study, shown to act in the amygdala as part of an inhibitory network which inhibits memory specifically related to learned fear. In another study, shown to act on vasoactive intestinal peptide (VIP)-expressing cells in the auditory cortex, most likely via extrasynaptic diffusion from local and long-range sources, to mediate disinhibition of glutamatergic cells via VIP cell-specific GRPR signaling which leads to enhanced auditory fear memories. Contributes to the regulation of food intake. Inhibits voltage-gated sodium channels but enhances voltage-gated potassium channels in hippocampal neurons. Induces sighing by acting directly on the pre-Botzinger complex, a cluster of several thousand neurons in the ventrolateral medulla responsible for inspiration during respiratory activity. In terms of biological role, induces an itch response through activation of receptors present on mast cells, triggering mast cell degranulation. This chain is Gastrin-releasing peptide (Grp), found in Rattus norvegicus (Rat).